Consider the following 212-residue polypeptide: Response regulator SsrB (212 aa).

Residues 1 to 138 (MKEYKILLVD…PTLNREAILA (138 aa)) form a required for prevention of DNA binding in absence of phosphorylation and for full stimulation of activity by acidic pH region. A Response regulatory domain is found at 5-121 (KILLVDDHEI…VLLAALQTVA (117 aa)). The residue at position 56 (Asp56) is a 4-aspartylphosphate. The HTH luxR-type domain occupies 143–208 (DTTNHQLLTL…ELLNCARRMR (66 aa)). Positions 167-186 (NHGISEKLHISIKTVETHRM) form a DNA-binding region, H-T-H motif. Position 203 is an S-nitrosocysteine (Cys203).

As to quaternary structure, homodimer; disulfide-linked; dimerizes upon DNA-binding. In terms of processing, ssrB phosphorylated on Asp-56 activates the expression of virulence genes whereas the unphosphorylated form controls biofilm formation. Independently of SsrA, can be phosphorylated by small inorganic phosphate donors (such as acetyl phosphate or phosphoramidate). Disulfide bond formation at Cys-203 is not required for dimerization. Post-translationally, cys-203 may serve as a redox sensor that is nitrosylated in presence of reactive nitrogen species (RNS) generated by the host, the modification modulates its DNA-binding activity. Cys-203 is relatively resistant to oxidation by hydrogen peroxide.

The protein resides in the cytoplasm. Its function is as follows. Member of the two-component regulatory system SsrA/SsrB (SpiR/SsrB) that is required for intracellular proliferation and systemic dissemination within the host. When inside acidic Salmonella-containing vesicles (SCV) within host cells the SsrA sensor kinase autophosphorylates and the phosphoryl group is transferred to the response regulator SsrB; phosphorylated SsrB activates the expression of genes encoding virulence proteins, including pathogenicity island 2 (SPI2) and other horizontally acquired genes, but also ancestral genes; it can stimulate gene expression both by recruiting RNA polymerase and by antagonizing the action of the transcriptional repressor hns (H-NS). Can also act independently of sensor kinase ssrA to support the dormant carrier state by directing the transcription of factors required for biofilm formation. DNA-binding is stimulated by acidic pH conditions, and binding promotes bending of DNA both upstream and downstream of binding sites. Binds a degenerate 18-basepair palindromic sequence with a 7-4-7 internal organization, and regulates gene expression from 86 operons. When phosphorylated, activates the transcription of the ABC transporter complex dalSTUV, which helps protect the organism from oxidative killing by host neutrophils. Binds the phoP promoter to stimulate expression in acidic pH conditions. Antagonizes hns to activate the transcription of ugtL. Following invasion of host cells, binds the hilD and hilA regulatory regions to repress their transcription and consequently to repress transcription of pathogenicity island 1 (SPI1) encoding genes involved in host cell invasion. Binds the promoters of the flagellar master regulators flhD and flhC to repress their expression and consequently to suppress flagellar motility and promote evasion of the host inflammasome during infection of host cells. Activates expression of sseI/srfH, sifA, sifB, sseJ and regulates its own expression. When unphosphorylated, relieves the hns-mediated repression of master biofilm regulator csgD by binding and bending the csgD regulatory region. May act as early as in the lumen of the host small intestine, to activate the expression of virulence proteins prior to invasion of host cells. This chain is Response regulator SsrB, found in Salmonella typhimurium (strain LT2 / SGSC1412 / ATCC 700720).